The sequence spans 65 residues: Alpha-toxin Bot1 (65 aa).

Residues 2 to 64 enclose the LCN-type CS-alpha/beta domain; that stretch reads RDAYIAQPEN…VPIRIPGKCH (63 aa). Disulfide bonds link C12–C63, C16–C36, C22–C46, and C26–C48. F65 is subject to Phenylalanine amide.

This sequence belongs to the long (4 C-C) scorpion toxin superfamily. Sodium channel inhibitor family. Alpha subfamily. In terms of tissue distribution, expressed by the venom gland.

Its subcellular location is the secreted. In terms of biological role, alpha toxins bind voltage-independently at site-3 of sodium channels (Nav) and inhibit the inactivation of the activated channels, thereby blocking neuronal transmission. This is Alpha-toxin Bot1 from Buthus occitanus tunetanus (Common European scorpion).